Reading from the N-terminus, the 69-residue chain is M-poneratoxin-Dq4e (69 aa).

The first 25 residues, 1-25 (MKLSAFTLAFALILMMAIMYNMAEA), serve as a signal peptide directing secretion. Positions 26–39 (AALADADADAEAIA) are excised as a propeptide.

In terms of tissue distribution, expressed by the venom gland.

It localises to the secreted. May have antimicrobial properties, like most ant linear peptides. In addition, when tested in vitro on the parasite Trypanosoma cruzi (responsible of the Chagas disease), is able to moderately reduce the number of the three forms (epimastigote, trypomastigote and amastigote) by inducing cell death through necrosis. This chain is M-poneratoxin-Dq4e, found in Dinoponera quadriceps (South American ant).